The primary structure comprises 351 residues: Histidinol-phosphate aminotransferase (351 aa).

An N6-(pyridoxal phosphate)lysine modification is found at lysine 209.

The protein belongs to the class-II pyridoxal-phosphate-dependent aminotransferase family. Histidinol-phosphate aminotransferase subfamily. Homodimer. It depends on pyridoxal 5'-phosphate as a cofactor.

It carries out the reaction L-histidinol phosphate + 2-oxoglutarate = 3-(imidazol-4-yl)-2-oxopropyl phosphate + L-glutamate. The protein operates within amino-acid biosynthesis; L-histidine biosynthesis; L-histidine from 5-phospho-alpha-D-ribose 1-diphosphate: step 7/9. The protein is Histidinol-phosphate aminotransferase of Chromohalobacter salexigens (strain ATCC BAA-138 / DSM 3043 / CIP 106854 / NCIMB 13768 / 1H11).